We begin with the raw amino-acid sequence, 554 residues long: Germacrene A synthase (554 aa).

Residues D306, D310, T453, and E457 each contribute to the Mg(2+) site. The short motif at 306–310 is the DDXXD motif element; that stretch reads DDTYD.

Belongs to the terpene synthase family. Requires Mg(2+) as cofactor.

It localises to the cytoplasm. It is found in the cytosol. It carries out the reaction (2E,6E)-farnesyl diphosphate = (+)-(R)-germacrene A + diphosphate. The protein operates within secondary metabolite biosynthesis; terpenoid biosynthesis. Its function is as follows. Sesquiterpene synthase involved in germacrene A biosynthesis. Also produces additional sesquiterpene products, including 4,5-di-epi-aristolochene, eremophilene, alpha-selinene. This is Germacrene A synthase from Pogostemon cablin (Patchouli).